We begin with the raw amino-acid sequence, 825 residues long: AP-3 complex subunit delta (825 aa).

10 HEAT repeats span residues 131–168 (GLARDLYRDVLILLNHSVPYVRKRTILLLYRLCLQYPE), 169–205 (AISACIPKLRERLDDPDTSVVNAAVSVICELARRAPK), 207–243 (YLEFAPDLFHLLTTSSNNWMLIKLIKLFASLTPYEPR), 244–281 (LVKKLIPSLTDIIENTHAMSLLYECINTIVSGNMLVGH), 285–323 (DKLASLCASKLRGFFEDTDQNLKYIALLCLRKLANTHPS), 324–360 (LVSAQLDIILKCLVDTDTSIRLRALDLVNEIVNKENI), 363–400 (IVKTLMLQLIVSSDESAVEDIRNSTATRIIEMTSKSTY), 469–513 (EKRT…LAHR), 515–547 (LLQAITKIFCQWCLEEEPTWGVEKFGLVKLWVE), and 548–584 (KIVSFIEQFLNFQDMEIQRRASEFYILFNQVSDIVNT). The disordered stretch occupies residues 787–825 (STNQGSMGDIVLETKSPIRVEKKKSKKKKKKKEKTSGKE). The segment covering 807 to 819 (EKKKSKKKKKKKE) has biased composition (basic residues).

Belongs to the adaptor complexes large subunit family. In terms of assembly, adaptor protein complex 3 (AP-3) is a heterotetramer composed of 2 large adaptins (apl5 and apl6), a medium adaptin (apm3) and a small adaptin (aps3).

It localises to the golgi apparatus. The protein localises to the cytoplasmic vesicle. It is found in the clathrin-coated vesicle membrane. Part of the AP-3 complex, an adaptor-related complex which is not clathrin-associated. The complex is associated with the Golgi region as well as more peripheral structures. It facilitates the budding of vesicles from the Golgi membrane and may be directly involved in trafficking to the vacuole. The chain is AP-3 complex subunit delta (apl5) from Schizosaccharomyces pombe (strain 972 / ATCC 24843) (Fission yeast).